Here is a 151-residue protein sequence, read N- to C-terminus: D-aminoacyl-tRNA deacylase (151 aa).

The short motif at 142-143 is the Gly-cisPro motif, important for rejection of L-amino acids element; sequence GP.

It belongs to the DTD family. In terms of assembly, homodimer.

The protein localises to the cytoplasm. The catalysed reaction is glycyl-tRNA(Ala) + H2O = tRNA(Ala) + glycine + H(+). It carries out the reaction a D-aminoacyl-tRNA + H2O = a tRNA + a D-alpha-amino acid + H(+). Functionally, an aminoacyl-tRNA editing enzyme that deacylates mischarged D-aminoacyl-tRNAs. Also deacylates mischarged glycyl-tRNA(Ala), protecting cells against glycine mischarging by AlaRS. Acts via tRNA-based rather than protein-based catalysis; rejects L-amino acids rather than detecting D-amino acids in the active site. By recycling D-aminoacyl-tRNA to D-amino acids and free tRNA molecules, this enzyme counteracts the toxicity associated with the formation of D-aminoacyl-tRNA entities in vivo and helps enforce protein L-homochirality. This is D-aminoacyl-tRNA deacylase from Psychrobacter arcticus (strain DSM 17307 / VKM B-2377 / 273-4).